We begin with the raw amino-acid sequence, 425 residues long: Polyribonucleotide 5'-hydroxyl-kinase Clp1 (425 aa).

ATP is bound by residues glutamate 22, lysine 62, and 124–129 (DVGKST).

This sequence belongs to the Clp1 family. Clp1 subfamily. Component of the tRNA splicing endonuclease complex, composed of CLP1, TSEN2, TSEN15, TSEN34 and TSEN54. Component of pre-mRNA cleavage complex II (CF-II). Also associates with numerous components of the pre-mRNA cleavage complex I (CF-I/CFIm), including NUDT21, CPSF2, CPSF3, CPSF6 and CPSF7. Interacts with CSTF2 and SYMPK. Mg(2+) serves as cofactor. Requires Mn(2+) as cofactor. The cofactor is Ni(2+).

The protein resides in the nucleus. The catalysed reaction is a 5'-end dephospho-2'-deoxyribonucleoside-DNA + ATP = a 5'-end 5'-phospho-2'-deoxyribonucleoside-DNA + ADP + H(+). It carries out the reaction a 5'-end dephospho-ribonucleoside-RNA + ATP = a 5'-end 5'-phospho-ribonucleoside-RNA + ADP + H(+). Functionally, polynucleotide kinase that can phosphorylate the 5'-hydroxyl groups of double-stranded RNA (dsRNA), single-stranded RNA (ssRNA), double-stranded DNA (dsDNA) and double-stranded DNA:RNA hybrids. dsRNA is phosphorylated more efficiently than dsDNA, and the RNA component of a DNA:RNA hybrid is phosphorylated more efficiently than the DNA component. Plays a key role in both tRNA splicing and mRNA 3'-end formation. Component of the tRNA splicing endonuclease complex: phosphorylates the 5'-terminus of the tRNA 3'-exon during tRNA splicing; this phosphorylation event is a prerequisite for the subsequent ligation of the two exon halves and the production of a mature tRNA. Its role in tRNA splicing and maturation is required for cerebellar development. Component of the pre-mRNA cleavage complex II (CF-II), which seems to be required for mRNA 3'-end formation. Also phosphorylates the 5'-terminus of exogenously introduced short interfering RNAs (siRNAs), which is a necessary prerequisite for their incorporation into the RNA-induced silencing complex (RISC). However, endogenous siRNAs and microRNAs (miRNAs) that are produced by the cleavage of dsRNA precursors by DICER1 already contain a 5'-phosphate group, so this protein may be dispensible for normal RNA-mediated gene silencing. In Homo sapiens (Human), this protein is Polyribonucleotide 5'-hydroxyl-kinase Clp1.